The following is a 187-amino-acid chain: Inner membrane-spanning protein YciB (187 aa).

The next 5 helical transmembrane spans lie at 25-45 (ATGA…ALYK), 50-70 (MQLI…FLHD), 76-96 (WKVT…HVMG), 118-138 (INWA…YVAY), and 148-168 (FKVF…GGYI).

The protein belongs to the YciB family.

The protein localises to the cell inner membrane. Functionally, plays a role in cell envelope biogenesis, maintenance of cell envelope integrity and membrane homeostasis. The polypeptide is Inner membrane-spanning protein YciB (Vibrio vulnificus (strain CMCP6)).